The chain runs to 433 residues: MANVVVVGAQWGDEGKGKVVDIYTEHADDVVRYQGGNNAGHTLVVGEEKVVLHLIPSGILHEGKRCIIGNGVVLDPEVFIQEITRLKDKGRLKDDRALLVSESIHIIMPYHKRIDIAREAKSGEKKIGTTGRGIGPTYEDKIGRRGIRLMDLLDRDVFARKLKENLEEKNVILEKLLGDKPFTFEEIYEQYCGYADILRNYVADTSLILYNDSKAGKKLLFEGAQGTLLDVDHGTYPFVTSSSTCAGGACTGTGVSPRDIHEIIGISKAYVTRVGSGPFPTELLDADGEKLRQVGHEFGATTGRPRRCGWFDAMVVRYAVRVNGLTGVALTKLDVLNDFETIKVCTGYTFEGKPLADLPANLAVFEKCEPVYEELPGWMSDISGARTFEELPEKAKSYVKRLEQLIGCPIVLVSIGPRRDQTIIISNPFQDKV.

GTP-binding positions include 12–18 (GDEGKGK) and 40–42 (GHT). D13 serves as the catalytic Proton acceptor. 2 residues coordinate Mg(2+): D13 and G40. Residues 13–16 (DEGK), 38–41 (NAGH), T130, R144, Q225, T240, and R304 each bind IMP. The Proton donor role is filled by H41. 300–306 (ATTGRPR) contacts substrate. Residues R306, 332 to 334 (KLD), and 414 to 416 (SIG) contribute to the GTP site.

Belongs to the adenylosuccinate synthetase family. As to quaternary structure, homodimer. Mg(2+) serves as cofactor.

The protein resides in the cytoplasm. The catalysed reaction is IMP + L-aspartate + GTP = N(6)-(1,2-dicarboxyethyl)-AMP + GDP + phosphate + 2 H(+). It participates in purine metabolism; AMP biosynthesis via de novo pathway; AMP from IMP: step 1/2. Functionally, plays an important role in the de novo pathway of purine nucleotide biosynthesis. Catalyzes the first committed step in the biosynthesis of AMP from IMP. The sequence is that of Adenylosuccinate synthetase from Geobacter sulfurreducens (strain ATCC 51573 / DSM 12127 / PCA).